We begin with the raw amino-acid sequence, 116 residues long: Flagellar transcriptional regulator FlhD (116 aa).

It belongs to the FlhD family. In terms of assembly, homodimer; disulfide-linked. Forms a heterohexamer composed of two FlhC and four FlhD subunits. Each FlhC binds a FlhD dimer, forming a heterotrimer, and a hexamer assembles by dimerization of two heterotrimers.

The protein resides in the cytoplasm. Its function is as follows. Functions in complex with FlhC as a master transcriptional regulator that regulates transcription of several flagellar and non-flagellar operons by binding to their promoter region. Activates expression of class 2 flagellar genes, including fliA, which is a flagellum-specific sigma factor that turns on the class 3 genes. Also regulates genes whose products function in a variety of physiological pathways. In Proteus mirabilis (strain HI4320), this protein is Flagellar transcriptional regulator FlhD.